Here is a 499-residue protein sequence, read N- to C-terminus: Phenylalanine--tRNA ligase alpha subunit (499 aa).

L-phenylalanine is bound by residues T333, 372-374 (QIE), and Y412. E414 lines the Mg(2+) pocket. Position 436 (F436) interacts with L-phenylalanine.

The protein belongs to the class-II aminoacyl-tRNA synthetase family. Phe-tRNA synthetase alpha subunit type 2 subfamily. As to quaternary structure, tetramer of two alpha and two beta subunits. It depends on Mg(2+) as a cofactor.

It localises to the cytoplasm. It catalyses the reaction tRNA(Phe) + L-phenylalanine + ATP = L-phenylalanyl-tRNA(Phe) + AMP + diphosphate + H(+). The sequence is that of Phenylalanine--tRNA ligase alpha subunit from Thermoplasma acidophilum (strain ATCC 25905 / DSM 1728 / JCM 9062 / NBRC 15155 / AMRC-C165).